Reading from the N-terminus, the 77-residue chain is Defensin-like protein 1 (77 aa).

An N-terminal signal peptide occupies residues 1-30 (MKLSVRFISAALLLFMVFIATGMGPVTVEA). 4 disulfides stabilise this stretch: cysteine 33-cysteine 77, cysteine 44-cysteine 64, cysteine 50-cysteine 71, and cysteine 54-cysteine 73.

This sequence belongs to the DEFL family. As to expression, expressed in the whole plant except roots.

The protein resides in the secreted. Functionally, confers broad-spectrum resistance to pathogens. The polypeptide is Defensin-like protein 1 (PDF2.3) (Arabidopsis thaliana (Mouse-ear cress)).